The chain runs to 487 residues: L-tartrate/succinate antiporter (487 aa).

14 consecutive transmembrane segments (helical) span residues 10–30, 33–53, 54–74, 93–113, 137–157, 189–209, 236–256, 292–312, 313–333, 340–360, 370–390, 393–413, 418–438, and 462–482; these read YLAP…AGLE, TWLY…EPVP, GAVV…WLLF, WAVS…FMFG, TLFL…VTPS, IGSY…AIFL, FLGM…LAYV, LMVG…AAMV, GYSV…DIVS, VFFW…TGFI, SLSG…FYLL, FFAS…AAAL, IPLP…SILT, and LGAI…LLWM.

The protein belongs to the SLC13A/DASS transporter (TC 2.A.47) family. DIT1 subfamily.

Its subcellular location is the cell inner membrane. It catalyses the reaction (2R,3R)-tartrate(out) + succinate(in) = (2R,3R)-tartrate(in) + succinate(out). Functionally, catalyzes the uptake of tartrate in exchange for intracellular succinate. Essential for anaerobic L-tartrate fermentation. The polypeptide is L-tartrate/succinate antiporter (ttdT) (Escherichia coli O6:H1 (strain CFT073 / ATCC 700928 / UPEC)).